The primary structure comprises 116 residues: Putative UPF0320 protein YJR162C (116 aa).

This sequence belongs to the UPF0320 family.

The chain is Putative UPF0320 protein YJR162C from Saccharomyces cerevisiae (strain ATCC 204508 / S288c) (Baker's yeast).